The primary structure comprises 511 residues: Neuronal acetylcholine receptor subunit alpha-2 (511 aa).

Positions 1–27 (MTLSHSALQFWTHLYLWCLLLVPAVLT) are cleaved as a signal peptide. The Extracellular segment spans residues 28–241 (QQGSHTHAED…VTYYFVIRRL (214 aa)). N-linked (GlcNAc...) asparagine glycosylation is found at asparagine 56 and asparagine 106. A disulfide bridge connects residues cysteine 160 and cysteine 174. The N-linked (GlcNAc...) asparagine glycan is linked to asparagine 212. Cysteine 224 and cysteine 225 are joined by a disulfide. The next 3 helical transmembrane spans lie at 242 to 266 (PLFYTINLIIPCLLISCLTVLVFYL), 274 to 292 (ITLCISVLLSLTVFLLLIT), and 308 to 329 (YLLFTMIFVTLSIVITVFVLNV). Over 330–484 (HHRSPSTHNM…WKYVAMVVDR (155 aa)) the chain is Cytoplasmic. Residues 485-503 (IFLWLFIIVCFLGTIGLFL) form a helical membrane-spanning segment.

It belongs to the ligand-gated ion channel (TC 1.A.9) family. Acetylcholine receptor (TC 1.A.9.1) subfamily. Alpha-2/CHRNA2 sub-subfamily. Neuronal AChR seems to be composed of two different types of subunits: alpha and non-alpha (beta). CHRNA2/Alpha-2 subunit can be combined to CHRNB2/beta-2 or CHRNB4/beta-4 to give rise to functional receptors. The alpha-2:beta-2 nAChR complex is proposed to be a heteropentamer with two subtypes: LS (low agonist sensitivity) with a (alpha-2)3:(beta-2)2 and HS (high agonist sensitivity) with a (alpha-2)2:(beta-2)3 stoichiometry; the subtypes differ in their subunit binding interfaces which are involved in ligand binding.

The protein resides in the synaptic cell membrane. It localises to the cell membrane. It carries out the reaction Ca(2+)(in) = Ca(2+)(out). The catalysed reaction is K(+)(in) = K(+)(out). The enzyme catalyses Na(+)(in) = Na(+)(out). Component of neuronal acetylcholine receptors (nAChRs) that function as pentameric, ligand-gated cation channels with high calcium permeability among other activities. nAChRs are excitatory neurotrasnmitter receptors formed by a collection of nAChR subunits known to mediate synaptic transmission in the nervous system and the neuromuscular junction. Each nAchR subunit confers differential attributes to channel properties, including activation, deactivation and desensitization kinetics, pH sensitivity, cation permeability, and binding to allosteric modulators. CHRNA2 forms heteropentameric neuronal acetylcholine receptors with CHRNB2 and CHRNB4 and plays a role in nicotine dependence. The protein is Neuronal acetylcholine receptor subunit alpha-2 (Chrna2) of Rattus norvegicus (Rat).